Reading from the N-terminus, the 377-residue chain is Histidinol-phosphate aminotransferase 2 (377 aa).

The segment at 17-44 (NLSPYVPGEQPQHDDLCKLNTNENPFPP) is disordered. Lys-228 carries the N6-(pyridoxal phosphate)lysine modification.

Belongs to the class-II pyridoxal-phosphate-dependent aminotransferase family. Histidinol-phosphate aminotransferase subfamily. Homodimer. Requires pyridoxal 5'-phosphate as cofactor.

The catalysed reaction is L-histidinol phosphate + 2-oxoglutarate = 3-(imidazol-4-yl)-2-oxopropyl phosphate + L-glutamate. The protein operates within amino-acid biosynthesis; L-histidine biosynthesis; L-histidine from 5-phospho-alpha-D-ribose 1-diphosphate: step 7/9. This chain is Histidinol-phosphate aminotransferase 2, found in Psychrobacter arcticus (strain DSM 17307 / VKM B-2377 / 273-4).